Reading from the N-terminus, the 185-residue chain is MISVTELRNGTKVEMDGGLWECLDYSHLKMGRGGAKVVTKFRNMETGSIVDRTFNSGEKLQDIYVEGKKMQYLYKDGADFMFMDMDTFEQVILPPSLVGDAAKFMKENTEVEVAMYGEKALTITLPNQVILKIVETDPGVRGDTVSGGTKPAKLETGAVVQVPLFVEQDTNVKVDTRTGQYLSRA.

This sequence belongs to the elongation factor P family.

The protein resides in the cytoplasm. Its pathway is protein biosynthesis; polypeptide chain elongation. Functionally, involved in peptide bond synthesis. Stimulates efficient translation and peptide-bond synthesis on native or reconstituted 70S ribosomes in vitro. Probably functions indirectly by altering the affinity of the ribosome for aminoacyl-tRNA, thus increasing their reactivity as acceptors for peptidyl transferase. The protein is Elongation factor P of Deinococcus deserti (strain DSM 17065 / CIP 109153 / LMG 22923 / VCD115).